The chain runs to 62 residues: Translational regulator CsrA 3 (62 aa).

Belongs to the CsrA/RsmA family. As to quaternary structure, homodimer; the beta-strands of each monomer intercalate to form a hydrophobic core, while the alpha-helices form wings that extend away from the core.

It is found in the cytoplasm. In terms of biological role, a key translational regulator that binds mRNA to regulate translation initiation and/or mRNA stability. Mediates global changes in gene expression, shifting from rapid growth to stress survival by linking envelope stress, the stringent response and the catabolite repression systems. Usually binds in the 5'-UTR; binding at or near the Shine-Dalgarno sequence prevents ribosome-binding, repressing translation, binding elsewhere in the 5'-UTR can activate translation and/or stabilize the mRNA. Its function is antagonized by small RNA(s). This Pseudomonas syringae pv. tomato (strain ATCC BAA-871 / DC3000) protein is Translational regulator CsrA 3.